The sequence spans 146 residues: Catabolic 3-dehydroquinase (146 aa).

Tyr24 acts as the Proton acceptor in catalysis. Substrate is bound by residues Asn78, His84, and Asp91. The active-site Proton donor is His104. Residues 105-106 and Arg115 each bind substrate; that span reads IT.

The protein belongs to the type-II 3-dehydroquinase family. As to quaternary structure, homododecamer. Adopts a ring-like structure, composed of an arrangement of two hexameric rings stacked on top of one another.

It catalyses the reaction 3-dehydroquinate = 3-dehydroshikimate + H2O. It functions in the pathway aromatic compound metabolism; 3,4-dihydroxybenzoate biosynthesis; 3,4-dihydroxybenzoate from 3-dehydroquinate: step 1/2. Functionally, is involved in the catabolism of quinate. Allows the utilization of quinate as carbon source via the beta-ketoadipate pathway. The chain is Catabolic 3-dehydroquinase from Candida tropicalis (strain ATCC MYA-3404 / T1) (Yeast).